The chain runs to 214 residues: Cytochrome b (214 aa).

4 helical membrane passes run 31–51 (FGSMLMTCLALQTITGFFLAI), 75–96 (WIMQNLHAIGASMFFVCIYIHI), 111–131 (WLSGVILLTALMATAFFGYVL), and 176–196 (FFALHFVLPFIIISMSSIHII). Heme b is bound by residues His81 and His95. Heme b contacts are provided by His180 and His194. An a ubiquinone-binding site is contributed by His199.

It belongs to the cytochrome b family. As to quaternary structure, the cytochrome bc1 complex contains 3 respiratory subunits (MT-CYB, CYC1 and UQCRFS1), 2 core proteins (UQCRC1 and UQCRC2) and probably 6 low-molecular weight proteins. It depends on heme b as a cofactor.

It localises to the mitochondrion inner membrane. Its function is as follows. Component of the ubiquinol-cytochrome c reductase complex (complex III or cytochrome b-c1 complex) that is part of the mitochondrial respiratory chain. The b-c1 complex mediates electron transfer from ubiquinol to cytochrome c. Contributes to the generation of a proton gradient across the mitochondrial membrane that is then used for ATP synthesis. The protein is Cytochrome b (MT-CYB) of Atractaspis micropholis (Mole viper).